The primary structure comprises 279 residues: NAD kinase (279 aa).

Asp-57 acts as the Proton acceptor in catalysis. NAD(+) is bound by residues 57–58, 133–134, Arg-159, Asp-161, and 172–177; these read DG, NE, and TAYNKS.

It belongs to the NAD kinase family. A divalent metal cation serves as cofactor.

Its subcellular location is the cytoplasm. The enzyme catalyses NAD(+) + ATP = ADP + NADP(+) + H(+). Involved in the regulation of the intracellular balance of NAD and NADP, and is a key enzyme in the biosynthesis of NADP. Catalyzes specifically the phosphorylation on 2'-hydroxyl of the adenosine moiety of NAD to yield NADP. The polypeptide is NAD kinase (Streptococcus pyogenes serotype M28 (strain MGAS6180)).